We begin with the raw amino-acid sequence, 313 residues long: Ribosomal protein L11 methyltransferase (313 aa).

The S-adenosyl-L-methionine site is built by Thr163, Gly184, Asp206, and Asn249.

This sequence belongs to the methyltransferase superfamily. PrmA family.

It is found in the cytoplasm. The catalysed reaction is L-lysyl-[protein] + 3 S-adenosyl-L-methionine = N(6),N(6),N(6)-trimethyl-L-lysyl-[protein] + 3 S-adenosyl-L-homocysteine + 3 H(+). In terms of biological role, methylates ribosomal protein L11. This Brevibacillus brevis (strain 47 / JCM 6285 / NBRC 100599) protein is Ribosomal protein L11 methyltransferase.